Consider the following 399-residue polypeptide: Bombesin receptor subtype-3 (399 aa).

The Extracellular segment spans residues 1–41; it reads MSQKQPQSPNQTLISITNDTESSSSVVSNDTTNKGWTGDNS. Asn-10 and Asn-18 each carry an N-linked (GlcNAc...) asparagine glycan. A helical membrane pass occupies residues 42-63; sequence PGIEALCAIYITYAVIISVGIL. Residues 64–82 are Cytoplasmic-facing; the sequence is GNAILIKVFFKTKSMQTVP. Residues 83 to 103 form a helical membrane-spanning segment; that stretch reads NIFITSLALGDLLLLLTCVPV. Topologically, residues 104–121 are extracellular; sequence DATHYLAEGWLFGRIGCK. Residues Cys-120 and Cys-203 are joined by a disulfide bond. A helical transmembrane segment spans residues 122–143; it reads VLSFIRLTSVGVSVFTLTILSA. Residues 144-163 are Cytoplasmic-facing; the sequence is DRYKAVVKPLERQPSNAILK. The chain crosses the membrane as a helical span at residues 164–184; that stretch reads TCAKAGCIWIMSMIFALPEAI. Topologically, residues 185-220 are extracellular; sequence FSNVHTLRDPNKNMTSEWCAFYPVSEKLLQEIHALL. The chain crosses the membrane as a helical span at residues 221 to 241; it reads SFLVFYIIPLSIISVYYSLIA. Topologically, residues 242–272 are cytoplasmic; it reads RTLYKSTLNIPTEEQSHARKQVESRKRIAKT. A helical transmembrane segment spans residues 273–293; that stretch reads VLVLVALFALCWLPNHLLNLY. At 294-313 the chain is on the extracellular side; it reads HSFTHKAYEDSSAIHFIVTI. A helical membrane pass occupies residues 314–333; the sequence is FSRVLAFSNSCVNPFALYWL. At 334–399 the chain is on the cytoplasmic side; sequence SKTFQKQFKA…RPMKKEENRV (66 aa). Cys-347 carries S-palmitoyl cysteine lipidation.

It belongs to the G-protein coupled receptor 1 family. Interacts with C6orf89. Mainly in uteri of pregnant animals.

Its subcellular location is the cell membrane. Functionally, role in sperm cell division, maturation, or function. The relative order of ligand affinity is GRP = neuromedin-C &gt;&gt; neuromedin-B. This receptor mediates its action by association with G proteins that activate a phosphatidylinositol-calcium second messenger system. This chain is Bombesin receptor subtype-3 (BRS3), found in Cavia porcellus (Guinea pig).